Reading from the N-terminus, the 247-residue chain is Probable transcriptional regulatory protein BT_0627 (247 aa).

This sequence belongs to the TACO1 family.

It localises to the cytoplasm. The sequence is that of Probable transcriptional regulatory protein BT_0627 from Bacteroides thetaiotaomicron (strain ATCC 29148 / DSM 2079 / JCM 5827 / CCUG 10774 / NCTC 10582 / VPI-5482 / E50).